Here is a 306-residue protein sequence, read N- to C-terminus: Elongation factor Ts (306 aa).

Residues 81-84 are involved in Mg(2+) ion dislocation from EF-Tu; sequence TDFV.

The protein belongs to the EF-Ts family.

The protein localises to the cytoplasm. In terms of biological role, associates with the EF-Tu.GDP complex and induces the exchange of GDP to GTP. It remains bound to the aminoacyl-tRNA.EF-Tu.GTP complex up to the GTP hydrolysis stage on the ribosome. The sequence is that of Elongation factor Ts from Polaromonas naphthalenivorans (strain CJ2).